Consider the following 173-residue polypeptide: Putative 4-hydroxy-4-methyl-2-oxoglutarate aldolase (173 aa).

Residues 89–92 and Arg111 each bind substrate; that span reads GGNL. Asp112 serves as a coordination point for a divalent metal cation.

Belongs to the class II aldolase/RraA-like family. In terms of assembly, homotrimer. A divalent metal cation is required as a cofactor.

The enzyme catalyses 4-hydroxy-4-methyl-2-oxoglutarate = 2 pyruvate. It carries out the reaction oxaloacetate + H(+) = pyruvate + CO2. In terms of biological role, catalyzes the aldol cleavage of 4-hydroxy-4-methyl-2-oxoglutarate (HMG) into 2 molecules of pyruvate. Also contains a secondary oxaloacetate (OAA) decarboxylase activity due to the common pyruvate enolate transition state formed following C-C bond cleavage in the retro-aldol and decarboxylation reactions. This is Putative 4-hydroxy-4-methyl-2-oxoglutarate aldolase from Albidiferax ferrireducens (strain ATCC BAA-621 / DSM 15236 / T118) (Rhodoferax ferrireducens).